We begin with the raw amino-acid sequence, 2240 residues long: MDDKGDPSNEEAPKAIKPTSKEFRKTWGFRRTTIAKREGAGDAEADPLEPPPPQQQLGLSLRRSGRQPKRTERVEQFLTIARRRGRRSMPVSLEDSGEPTSCPATDAETASEGSVESASETRSGPQSASTAVKERPASSEKVKGGDDHDDTSDSDSDGLTLKELQNRLRRKREQEPTERPLKGIQSRLRKKRREEGPAETVGSEASDTVEGVLPSKQEPENDQGVVSQAGKDDRESKLEGKAAQDIKDEEPGDLGRPKPECEGYDPNALYCICRQPHNNRFMICCDRCEEWFHGDCVGISEARGRLLERNGEDYICPNCTILQVQDETHSETADQQEAKWRPGDADGTDCTSIGTIEQKSSEDQGIKGRIEKAANPSGKKKLKIFQPVIEAPGASKCIGPGCCHVAQPDSVYCSNDCILKHAAATMKFLSSGKEQKPKPKEKMKMKPEKPSLPKCGAQAGIKISSVHKRPAPEKKETTVKKAVVVPARSEALGKEAACESSTPSWASDHNYNAVKPEKTAAPSPSLLYKSTKEDRRSEEKAAAMAASKKTAPPGSAVGKQPAPRNLVPKKSSFANVAAATPAIKKPPSGFKGTIPKRPWLSATPSSGASAARQAGPAPAAATAASKKFPGSAALVGAVRKPVVPSVPMASPAPGRLGAMSAAPSQPNSQIRQNIRRSLKEILWKRVNDSDDLIMTENEVGKIALHIEKEMFNLFQVTDNRYKSKYRSIMFNLKDPKNQGLFHRVLREEISLAKLVRLKPEELVSKELSTWKERPARSVMESRTKLHNESKKTAPRQEAIPDLEDSPPVSDSEEQQESARAVPEKSTAPLLDVFSSMLKDTTSQHRAHLFDLNCKICTGQVPSAEDEPAPKKQKLSASVKKEDLKSKHDSSAPDPAPDSADEVMPEAVPEVASEPGLESASHPNVDRTYFPGPPGDGHPEPSPLEDLSPCPASCGSGVVTTVTVSGRDPRTAPSSSCTAVASAASRPDSTHMVEARQDVPKPVLTSVMVPKSILAKPSSSPDPRYLSVPPSPNISTSESRSPPEGDTTLFLSRLSTIWKGFINMQSVAKFVTKAYPVSGCFDYLSEDLPDTIHIGGRIAPKTVWDYVGKLKSSVSKELCLIRFHPATEEEEVAYISLYSYFSSRGRFGVVANNNRHVKDLYLIPLSAQDPVPSKLLPFEGPGLESPRPNIILGLVICQKIKRPANSGELDKMDEKRTRLQPEEADVPAYPKVATVPQSEKKPSKYPLCSADAAVSTTPPGSPPPPPPLPEPPVLKVLSSLKPAAPSPATAATTAAAASTAASSTASSASKTASPLEHILQTLFGKKKSFDPSAREPPGSTAGLPQEPKTTAEDGVPAPPLLDPIVQQFGQFSKDKALEEEEDDRPYDPEEEYDPERAFDTQLVERGRRHEVERAPEAAAAEREEVAYDPEDETILEEAKVTVDDLPNRMCADVRRNSVERPAEPVAGAATPSLVEQQKMLEELNKQIEEQKRQLEEQEEALRQQRAAVGVSMAHFSVSDALMSPPPKSSLPKAELFQQEQQSADKPASLPPASQASNHRDPRQARRLATETGEGEGEPLSRLSARGAQGALPERDASRGGLVGQAPMPVPEEKEPASSPWASGEKPPAGSEQDGWKAEPGEGTRPATVGDSSARPARRVLLPTPPCGALQPGFPLQHDGERDPFTCPGFASQDKALGSAQYEDPRNLHSAGRSSSPAGETEGDREPQARPGEGTAPLPPPGQKVGGSQPPFQGQREPGPHALGMSGLHGPNFPGPRGPAPPFPEENIASNDGPRGPPPARFGAQKGPIPSLFSGQHGPPPYGDSRGPSPSYLGGPRGVAPSQFEERKDPHGEKREFQDAPYNEVTGAPAQFEGTEQAPFLGSRGGAPFQFGGQRRPLLSQLKGPRGGPPPSQFGGQRGPPPGHFVGPRGPHPSQFETARGPHPNQFEGPRGQAPNFMPGPRGIQPQQFEDQRVHSPPRFTNQRAPAPLQFGGLRGSAPFSEKNEQTPSRFHFQGQAPQVMKPGPRPLLELPSHPPQHRKDRWEEAGPPSALSSSAPGQGPEADGQWASADFREGKGHEYRNQTFEGRQRERFDVGPKEKPLEEPDAQGRASEDRRRERERGRNWSRERDWDRPREWDRHRDKDSSRDWDRNRERSANRDREREADRGKEWDRSRERSRNRERERDRRRDRDRSRSRERDRDKARDRERGRDRKDRSKSKESARDPKPEASRASDAGTASQA.

N-acetylmethionine is present on M1. Residues 1-25 show a composition bias toward basic and acidic residues; the sequence is MDDKGDPSNEEAPKAIKPTSKEFRK. Residues 1 to 259 are disordered; it reads MDDKGDPSNE…EPGDLGRPKP (259 aa). Phosphoserine occurs at positions 60 and 114. A compositionally biased stretch (polar residues) spans 111 to 130; the sequence is SEGSVESASETRSGPQSAST. Positions 132–146 are enriched in basic and acidic residues; that stretch reads VKERPASSEKVKGGD. Residues 147 to 156 are compositionally biased toward acidic residues; sequence DHDDTSDSDS. Phosphothreonine is present on T151. A phosphoserine mark is found at S152 and S154. 2 short sequence motifs (nuclear localization signal) span residues 165–173 and 185–193; these read QNRLRRKRE and QSRLRKKRR. Residues 172–181 are compositionally biased toward basic and acidic residues; it reads REQEPTERPL. The segment covering 230–246 has biased composition (basic and acidic residues); that stretch reads GKDDRESKLEGKAAQDI. Residue K247 forms a Glycyl lysine isopeptide (Lys-Gly) (interchain with G-Cter in SUMO2) linkage. The segment at 268-322 adopts a PHD-type zinc-finger fold; the sequence is ALYCICRQPHNNRFMICCDRCEEWFHGDCVGISEARGRLLERNGEDYICPNCTIL. Disordered regions lie at residues 431–456, 501–567, 584–618, 773–826, 860–947, 1013–1045, 1206–1427, 1453–1472, and 1517–2240; these read SGKEQKPKPKEKMKMKPEKPSLPKCG, STPS…RNLV, KKPPSGFKGTIPKRPWLSATPSSGASAARQAGPAP, RPAR…EKST, VPSA…EDLS, LAKPSSSPDPRYLSVPPSPNISTSESRSPPEGD, GELD…VAYD, RRNSVERPAEPVAGAATPSL, and SDAL…ASQA. The span at 433 to 451 shows a compositional bias: basic and acidic residues; sequence KEQKPKPKEKMKMKPEKPS. Positions 501–510 are enriched in polar residues; that stretch reads STPSWASDHN. At S523 the chain carries Phosphoserine. The segment covering 530-541 has biased composition (basic and acidic residues); that stretch reads STKEDRRSEEKA. Low complexity-rich tracts occupy residues 542–551 and 604–618; these read AAMAASKKTA and PSSGASAARQAGPAP. One can recognise a TFIIS central domain in the interval 670–790; that stretch reads IRQNIRRSLK…SRTKLHNESK (121 aa). The segment covering 773–791 has biased composition (basic and acidic residues); sequence RPARSVMESRTKLHNESKK. The span at 800–815 shows a compositional bias: acidic residues; that stretch reads PDLEDSPPVSDSEEQQ. S805 and S809 each carry phosphoserine. The span at 878 to 890 shows a compositional bias: basic and acidic residues; that stretch reads VKKEDLKSKHDSS. A Glycyl lysine isopeptide (Lys-Gly) (interchain with G-Cter in SUMO2) cross-link involves residue K879. S889 and S898 each carry phosphoserine. A compositionally biased stretch (pro residues) spans 930 to 941; sequence PGPPGDGHPEPS. A phosphoserine mark is found at S1019, S1030, and S1040. A compositionally biased stretch (basic and acidic residues) spans 1207 to 1220; that stretch reads ELDKMDEKRTRLQP. Phosphotyrosine is present on Y1244. T1256 carries the phosphothreonine modification. Over residues 1258–1271 the composition is skewed to pro residues; the sequence is PGSPPPPPPLPEPP. Residues S1260 and S1312 each carry the phosphoserine modification. Residues 1276–1313 show a composition bias toward low complexity; the sequence is LSSLKPAAPSPATAATTAAAASTAASSTASSASKTASP. A compositionally biased stretch (acidic residues) spans 1376–1392; the sequence is LEEEEDDRPYDPEEEYD. The span at 1393–1424 shows a compositional bias: basic and acidic residues; that stretch reads PERAFDTQLVERGRRHEVERAPEAAAAEREEV. S1456 is modified (phosphoserine). A Phosphothreonine modification is found at T1469. A phosphoserine mark is found at S1522 and S1714. A compositionally biased stretch (pro residues) spans 1771–1782; it reads FPGPRGPAPPFP. An Omega-N-methylarginine modification is found at R1835. The span at 1842 to 1856 shows a compositional bias: basic and acidic residues; sequence FEERKDPHGEKREFQ. Residues R1893, R1894, R1977, R1982, R1993, R2008, and R2024 each carry the asymmetric dimethylarginine modification. A compositionally biased stretch (low complexity) spans 2044 to 2059; sequence AGPPSALSSSAPGQGP. Composition is skewed to basic and acidic residues over residues 2069–2101 and 2109–2230; these read DFREGKGHEYRNQTFEGRQRERFDVGPKEKPLE and ASED…EASR.

As to quaternary structure, interacts specifically (via PHD-type zinc finger) with histone H3 that is trimethylated at 'Lys-4' (H3K4me3), histone phosphorylation at 'Thr-3' or 'Thr-6' disrupts this binding and promotes translocation of DIDO1 from chromatin to the mitotic spindle during mitosis. Ubiquitous.

Its subcellular location is the cytoplasm. The protein resides in the nucleus. It is found in the cytoskeleton. It localises to the spindle. Putative transcription factor, weakly pro-apoptotic when overexpressed. Tumor suppressor. Required for early embryonic stem cell development. Its function is as follows. Displaces isoform 4 at the onset of differentiation, required for repression of stemness genes. The sequence is that of Death-inducer obliterator 1 (DIDO1) from Homo sapiens (Human).